The chain runs to 191 residues: dCTP deaminase, dUMP-forming (191 aa).

Residues 101 to 106, Asp-119, 127 to 129, Gln-148, Tyr-162, and Gln-174 contribute to the dCTP site; these read KSSLGR and TLE. Glu-129 functions as the Proton donor/acceptor in the catalytic mechanism.

The protein belongs to the dCTP deaminase family. As to quaternary structure, homotrimer.

It catalyses the reaction dCTP + 2 H2O = dUMP + NH4(+) + diphosphate. It participates in pyrimidine metabolism; dUMP biosynthesis; dUMP from dCTP: step 1/1. Bifunctional enzyme that catalyzes both the deamination of dCTP to dUTP and the hydrolysis of dUTP to dUMP without releasing the toxic dUTP intermediate. This Streptomyces coelicolor (strain ATCC BAA-471 / A3(2) / M145) protein is dCTP deaminase, dUMP-forming.